The sequence spans 192 residues: Fe/S biogenesis protein NfuA (192 aa).

Residues cysteine 149 and cysteine 152 each coordinate [4Fe-4S] cluster.

It belongs to the NfuA family. As to quaternary structure, homodimer. Requires [4Fe-4S] cluster as cofactor.

In terms of biological role, involved in iron-sulfur cluster biogenesis. Binds a 4Fe-4S cluster, can transfer this cluster to apoproteins, and thereby intervenes in the maturation of Fe/S proteins. Could also act as a scaffold/chaperone for damaged Fe/S proteins. This Shewanella pealeana (strain ATCC 700345 / ANG-SQ1) protein is Fe/S biogenesis protein NfuA.